We begin with the raw amino-acid sequence, 44 residues long: MSKLVQAISDAVQAGQNQDWAKLGTSIVGIVENGVGILGKLFGF.

Belongs to the staphylococcal hemolytic protein family.

The protein resides in the secreted. Functionally, has hemolytic activity and also inhibits the growth of gonococci. This Staphylococcus haemolyticus (strain JCSC1435) protein is Antibacterial protein 3 homolog.